A 320-amino-acid polypeptide reads, in one-letter code: o-succinylbenzoate synthase (320 aa).

The Proton donor role is filled by lysine 133. 3 residues coordinate Mg(2+): aspartate 161, glutamate 190, and aspartate 213. Lysine 235 (proton acceptor) is an active-site residue.

Belongs to the mandelate racemase/muconate lactonizing enzyme family. MenC type 1 subfamily. It depends on a divalent metal cation as a cofactor.

The enzyme catalyses (1R,6R)-6-hydroxy-2-succinyl-cyclohexa-2,4-diene-1-carboxylate = 2-succinylbenzoate + H2O. It participates in quinol/quinone metabolism; 1,4-dihydroxy-2-naphthoate biosynthesis; 1,4-dihydroxy-2-naphthoate from chorismate: step 4/7. Its pathway is quinol/quinone metabolism; menaquinone biosynthesis. Converts 2-succinyl-6-hydroxy-2,4-cyclohexadiene-1-carboxylate (SHCHC) to 2-succinylbenzoate (OSB). This Salmonella paratyphi B (strain ATCC BAA-1250 / SPB7) protein is o-succinylbenzoate synthase.